The primary structure comprises 955 residues: MPRRKGLCLFLQMLLLHLYGVCQAQPNYQVFDLLSVSVQRQVTSFLQSALSNPSMNEVYVLSTFKLQPKSTVTLFGLYSTSDNSRFFEFTVMGRLNKASLRYLRSDGKLHSVFFNKLDIADGKQHALLLHLSGLHRGATFAKLYIDCNPTGVVEDLPRPLSGIRLNTGSVHLRTLQKKGQDSMDELKLVMGGTLSEVGAIQECFMQKSEAGQQTGDVSRQLIGQITQMNQMLGELRDVMRQQVKETMFLRNTIAECQACGLGPDFPLPTKVPQRLATTTPPKPRCDATSCFRGVRCIDTEGGFQCGPCPEGYTGNGVICTDVDECRLNPCFLGVRCINTSPGFKCESCPPGYTGSTIQGIGINFAKQNKQVCTDTNECENGRNGGCTSNSLCINTMGSFRCGGCKPGYVGDQIKGCKPEKSCRHGQNPCHASAQCSEEKDGDVTCTCSVGWAGNGYLCGKDTDIDGYPDEALPCPDKNCKKDNCVYVPNSGQEDTDKDNIGDACDEDADGDGILNEQDNCVLAANIDQKNSDQDIFGDACDNCRLTLNNDQRDTDNDGKGDACDDDMDGDGIKNILDNCQRVPNVDQKDKDGDGVGDICDSCPDIINPNQSDIDNDLVGDSCDTNQDSDGDGHQDSTDNCPTVINSNQLDTDKDGIGDECDDDDDNDGIPDTVPPGPDNCKLVPNPGQEDDNNDGVGDVCEADFDQDTVIDRIDVCPENAEITLTDFRAYQTVVLDPEGDAQIDPNWIVLNQGMEIVQTMNSDPGLAVGYTAFNGVDFEGTFHVNTMTDDDYAGFIFGYQDSSSFYVVMWKQTEQTYWQATPFRAVAEPGIQLKAVKSKSGPGEHLRNALWHTGDTNDQVRLLWKDPRNVGWKDKVSYRWFLQHRPQVGYIRARFYEGTELVADSGVTVDTTMRGGRLGVFCFSQENIIWSNLKYRCNDTIPEDFQAFQAQQFSS.

Positions Met-1–Ala-24 are cleaved as a signal peptide. The Laminin G-like domain maps to Gln-25 to Gly-192. Residues Pro-281–Thr-320 enclose the EGF-like 1 domain. Disulfide bonds link Cys-285/Cys-296, Cys-290/Cys-305, Cys-308/Cys-319, Cys-325/Cys-336, Cys-330/Cys-345, Cys-348/Cys-372, Cys-378/Cys-392, Cys-386/Cys-401, Cys-404/Cys-416, Cys-422/Cys-435, Cys-429/Cys-445, Cys-447/Cys-458, Cys-474/Cys-479, Cys-484/Cys-504, Cys-520/Cys-540, Cys-543/Cys-563, Cys-579/Cys-599, Cys-602/Cys-622, Cys-640/Cys-660, Cys-680/Cys-700, and Cys-716/Cys-937. Positions Asp-321–Gln-358 constitute an EGF-like 2; calcium-binding domain. Residues Asp-374–Gly-415 form the EGF-like 3; calcium-binding domain. In terms of domain architecture, EGF-like 4 spans Pro-418–Gly-459. TSP type-3 repeat units follow at residues Lys-460–Gln-492, Glu-493–Gln-528, Lys-529–Gln-551, Arg-552–Gln-587, Lys-588–Gln-610, Ser-611–Gln-648, Leu-649–Gln-688, and Glu-689–Leu-724. A glycan (N-linked (GlcNAc...) asparagine) is linked at Asn-609. The disordered stretch occupies residues Gln-610 to Asp-678. Residues Thr-637 to Leu-649 show a composition bias toward polar residues. Acidic residues predominate over residues Gly-657–Gly-668. The 215-residue stretch at Arg-728 to Pro-942 folds into the TSP C-terminal domain. A glycan (N-linked (GlcNAc...) asparagine) is linked at Asn-938.

Belongs to the thrombospondin family. Homotrimer; disulfide-linked.

It localises to the endoplasmic reticulum. Its subcellular location is the sarcoplasmic reticulum. The protein localises to the secreted. The protein resides in the extracellular space. It is found in the extracellular matrix. Functionally, adhesive glycoprotein that mediates cell-to-cell and cell-to-matrix interactions and may be involved in various processes including cellular proliferation, migration, adhesion and attachment. May play a role in ER stress response. May participate in the genesis and function of cardiac and skeletal muscle. The sequence is that of Thrombospondin-4 (thbs4) from Xenopus laevis (African clawed frog).